A 249-amino-acid polypeptide reads, in one-letter code: Triosephosphate isomerase (249 aa).

Asn12 and Lys14 together coordinate substrate. Lys14 is modified (N6-acetyllysine). Position 16 is a deamidated asparagine (Asn16). Tyr68 bears the 3'-nitrotyrosine mark. A Deamidated asparagine modification is found at Asn72. Residue Ser80 is modified to Phosphoserine. The Electrophile role is filled by His96. Position 106 is a phosphoserine (Ser106). Lys142 participates in a covalent cross-link: Glycyl lysine isopeptide (Lys-Gly) (interchain with G-Cter in SUMO1). N6-succinyllysine is present on Lys149. Lys156 is modified (N6-acetyllysine; alternate). Lys156 is subject to N6-succinyllysine; alternate. Ser159 carries the phosphoserine modification. Glu166 (proton acceptor) is an active-site residue. Thr173 is modified (phosphothreonine). The residue at position 194 (Lys194) is an N6-acetyllysine; alternate. An N6-succinyllysine; alternate modification is found at Lys194. Lys194 carries the post-translational modification N6-methyllysine; alternate. Ser198 is subject to Phosphoserine. Tyr209 is subject to 3'-nitrotyrosine. Ser212 carries the post-translational modification Phosphoserine. The residue at position 214 (Thr214) is a Phosphothreonine. Ser223 carries the post-translational modification Phosphoserine. Residue Lys238 is modified to N6-acetyllysine.

It belongs to the triosephosphate isomerase family. Homodimer. In terms of processing, asn-16 and Asn-72 undergo deamidation which gives rise to four extra negative charges. These are expected to decrease subunit-subunit interactions and so expose the hydrophobic interface to the aqueous environment.

The protein resides in the cytoplasm. The catalysed reaction is D-glyceraldehyde 3-phosphate = dihydroxyacetone phosphate. It catalyses the reaction dihydroxyacetone phosphate = methylglyoxal + phosphate. It participates in carbohydrate degradation; glycolysis; D-glyceraldehyde 3-phosphate from glycerone phosphate: step 1/1. It functions in the pathway carbohydrate biosynthesis; gluconeogenesis. Functionally, triosephosphate isomerase is an extremely efficient metabolic enzyme that catalyzes the interconversion between dihydroxyacetone phosphate (DHAP) and D-glyceraldehyde-3-phosphate (G3P) in glycolysis and gluconeogenesis. Its function is as follows. It is also responsible for the non-negligible production of methylglyoxal a reactive cytotoxic side-product that modifies and can alter proteins, DNA and lipids. This chain is Triosephosphate isomerase (TPI1), found in Oryctolagus cuniculus (Rabbit).